Reading from the N-terminus, the 252-residue chain is MILHAQAKHGKLGLPWLVFLHGFSGDCHEWQEVGEAFADYSRLYVDLLGHGGSAAISVDGFDDVTDLLRKTLVSYNILDFWLVGYSLGGRVAMMAACQGLAGLCGVIVEGGHPGLQNAEQRAERQRSDRQWAQRFRTEPLTAVFADWYQQPVFASLNDDQRRELVALRSNNNGATLAAMLEATSLAVQPDLRANLSARTFAFYYLCGERDSKFRALAAELAADCHVIPRAGHNAHRENPAGVIASLAQILRF.

The protein belongs to the AB hydrolase superfamily. MenH family. Monomer.

The enzyme catalyses 5-enolpyruvoyl-6-hydroxy-2-succinyl-cyclohex-3-ene-1-carboxylate = (1R,6R)-6-hydroxy-2-succinyl-cyclohexa-2,4-diene-1-carboxylate + pyruvate. Its pathway is quinol/quinone metabolism; 1,4-dihydroxy-2-naphthoate biosynthesis; 1,4-dihydroxy-2-naphthoate from chorismate: step 3/7. The protein operates within quinol/quinone metabolism; menaquinone biosynthesis. Its function is as follows. Catalyzes a proton abstraction reaction that results in 2,5-elimination of pyruvate from 2-succinyl-5-enolpyruvyl-6-hydroxy-3-cyclohexene-1-carboxylate (SEPHCHC) and the formation of 2-succinyl-6-hydroxy-2,4-cyclohexadiene-1-carboxylate (SHCHC). The chain is 2-succinyl-6-hydroxy-2,4-cyclohexadiene-1-carboxylate synthase from Shigella flexneri serotype 5b (strain 8401).